A 327-amino-acid polypeptide reads, in one-letter code: DNA-directed RNA polymerase subunit alpha (327 aa).

Positions 1–231 (MIYQMQMPAK…DHVTFFANFS (231 aa)) are alpha N-terminal domain (alpha-NTD). The tract at residues 252 to 327 (MRRLFHTKIE…GMDITKYQMK (76 aa)) is alpha C-terminal domain (alpha-CTD).

The protein belongs to the RNA polymerase alpha chain family. In terms of assembly, homodimer. The RNAP catalytic core consists of 2 alpha, 1 beta, 1 beta' and 1 omega subunit. When a sigma factor is associated with the core the holoenzyme is formed, which can initiate transcription.

It catalyses the reaction RNA(n) + a ribonucleoside 5'-triphosphate = RNA(n+1) + diphosphate. Functionally, DNA-dependent RNA polymerase catalyzes the transcription of DNA into RNA using the four ribonucleoside triphosphates as substrates. The chain is DNA-directed RNA polymerase subunit alpha from Pelodictyon phaeoclathratiforme (strain DSM 5477 / BU-1).